We begin with the raw amino-acid sequence, 506 residues long: Transcription factor CP2 (506 aa).

In terms of domain architecture, Grh/CP2 DB spans 61–300 (ENKILPFQYV…SPGFNSSHNS (240 aa)). A DNA-binding region spans residues 133–395 (EHQQLEGWRW…LFNALKGRIV (263 aa)). Disordered regions lie at residues 238 to 268 (FKPK…YQPS) and 291 to 316 (SPGF…QPEP). Over residues 241-265 (KGADRKQKTDREKMEKRTPQEKEKY) the composition is skewed to basic and acidic residues. Residues 291 to 300 (SPGFNSSHNS) show a composition bias toward polar residues.

It belongs to the grh/CP2 family. CP2 subfamily. In terms of assembly, component of the SSP (stage selector protein) complex, which appears to be a heteromer of TFCP2 and 2 copies of NFE4.

The protein localises to the nucleus. In terms of biological role, may function as a transcription factor. The protein is Transcription factor CP2 (tfcp2) of Xenopus laevis (African clawed frog).